The following is a 146-amino-acid chain: Ribonuclease H (146 aa).

Positions 1 to 143 (MRKKIIIYTD…CDYLARQAIK (143 aa)) constitute an RNase H type-1 domain. Mg(2+) contacts are provided by aspartate 10, glutamate 48, aspartate 70, and aspartate 135.

Belongs to the RNase H family. As to quaternary structure, monomer. Requires Mg(2+) as cofactor.

The protein localises to the cytoplasm. The catalysed reaction is Endonucleolytic cleavage to 5'-phosphomonoester.. In terms of biological role, endonuclease that specifically degrades the RNA of RNA-DNA hybrids. This Prosthecochloris aestuarii (strain DSM 271 / SK 413) protein is Ribonuclease H.